Here is a 204-residue protein sequence, read N- to C-terminus: 3-isopropylmalate dehydratase small subunit (204 aa).

This sequence belongs to the LeuD family. LeuD type 1 subfamily. In terms of assembly, heterodimer of LeuC and LeuD.

It carries out the reaction (2R,3S)-3-isopropylmalate = (2S)-2-isopropylmalate. It functions in the pathway amino-acid biosynthesis; L-leucine biosynthesis; L-leucine from 3-methyl-2-oxobutanoate: step 2/4. Functionally, catalyzes the isomerization between 2-isopropylmalate and 3-isopropylmalate, via the formation of 2-isopropylmaleate. The chain is 3-isopropylmalate dehydratase small subunit from Chloroflexus aggregans (strain MD-66 / DSM 9485).